Consider the following 309-residue polypeptide: D-galacturonate reductase (309 aa).

The Proton donor role is filled by Tyr-50. Position 109 (His-109) interacts with substrate. 210–264 provides a ligand contact to NADP(+); that stretch reads SPLGSTGSPLMSADPVVKIAEKKGISPTTVLLSYHVNRGSTVLAKSVTPARIKAN.

The protein belongs to the aldo/keto reductase family.

The enzyme catalyses L-galactonate + NADP(+) = aldehydo-D-galacturonate + NADPH + H(+). It functions in the pathway carbohydrate acid metabolism. Functionally, mediates the reduction of D-galacturonate to L-galactonate, the first step in D-galacturonate catabolic process. Also has activity with D-glucuronate and DL-glyceraldehyde. No activity is observed with D-glucose, D-fructose, D-xylose, D-galactose, L-arabinose or D-mannose. Activity is seen only with NADPH and not with NADH. This is D-galacturonate reductase (gar1) from Hypocrea jecorina (Trichoderma reesei).